Reading from the N-terminus, the 518-residue chain is GTPase MTG2, mitochondrial (518 aa).

The N-terminal 23 residues, 1–23 (MSIAWSSVFKRELRLERFLPRVY), are a transit peptide targeting the mitochondrion. The 251-residue stretch at 89–339 (GNFVDVRIVK…QHFLFELKSI (251 aa)) folds into the Obg domain. Positions 340–512 (ADLGLIGLPN…LKKKMFKCAR (173 aa)) constitute an OBG-type G domain. Residues 346 to 353 (GLPNAGKS), 394 to 398 (DIPGI), and 460 to 463 (NKVD) contribute to the GTP site.

Belongs to the TRAFAC class OBG-HflX-like GTPase superfamily. OBG GTPase family. As to quaternary structure, interacts with the mitochondrial 54S large ribosomal subunit.

It is found in the mitochondrion inner membrane. Functionally, required for mitochondrial protein synthesis. May be involved in mitochondrial ribosome biogenesis. This Saccharomyces cerevisiae (strain ATCC 204508 / S288c) (Baker's yeast) protein is GTPase MTG2, mitochondrial (MTG2).